Reading from the N-terminus, the 88-residue chain is Small ribosomal subunit protein bS20 (88 aa).

Residues 1–28 (MANTSSAKKATRKIARRTAVNKSRRTQM) are disordered.

Its function is as follows. Binds directly to 16S ribosomal RNA. The chain is Small ribosomal subunit protein bS20 from Rhodopseudomonas palustris (strain ATCC BAA-98 / CGA009).